The following is a 461-amino-acid chain: Type IV secretion system protein PtlD homolog (461 aa).

Residues 1–24 form the signal peptide; it reads MAGLSRILLSCTLACLLAGQAAQA. 5 consecutive transmembrane segments (helical) span residues 118–138, 232–252, 253–273, 294–314, and 333–353; these read LQPLVYSMMTLLVLLTGYALL, WLLCAMIVAASAGGWLCLAAS, LLIVPGLIVTLLLSLGPLFLV, ALVFMALGTPAVGLLSDVLAG, and MLAATLCATATLMLLTLVPLA. The segment covering 376–411 has biased composition (low complexity); the sequence is AHRQAAARQYAPRPAAAAAAAGPHQAGTYAASATPA. The tract at residues 376–461 is disordered; sequence AHRQAAARQY…RVLPRKPNLP (86 aa). A compositionally biased stretch (basic and acidic residues) spans 439–453; it reads VRRDDRPAPAPDRRV.

The protein resides in the cell membrane. The protein is Type IV secretion system protein PtlD homolog (ptlD) of Bordetella bronchiseptica (strain ATCC BAA-588 / NCTC 13252 / RB50) (Alcaligenes bronchisepticus).